Reading from the N-terminus, the 785-residue chain is MPIGNPINTNDIKSNRMRQESNMSAVSNSESTIGQSTQQQQQQQQYLGQSVQPLMPVSYQYVVPEQWPYPQYYQQPQSQSQQQLQSQPQMYQVQESFQSSGSDSNASNPPSTSVGVPSNATATALPNGSAITTKKSNNSTNISNNVPYYYYFPQMQAQQSMAYSYPQAYYYYPANGDGTTNGATPSVTSNQVQNPNLEKTYSTFEQQQQHQQQQQLQAQTYPAQPPKIGNAFSKFSKSGPPSDSSSGSMSPNSNRTSRNSNSISSLAQQPPMSNYPQPSTYQYPGFHKTSSIPNSHSPIPPRSLTTPTQGPTSQNGPLSYNLPQVGLLPPQQQQQVSPLYDGNSITPPVKPSTDQETYLTANRHGVSDQQYDSMAKTMNSFQTTTIRHPMPLIATTNATGSNTSGTSASIIRPRVTTTMWEDEKTLCYQVEANGISVVRRADNDMVNGTKLLNVTKMTRGRRDGILKAEKIRHVVKIGSMHLKGVWIPFERALAIAQREKIADYLYPLFIRDIQSVLKQNNPSNDSSSSSSSTGIKSISPRTYYQPINNYQNPNGPSNISAAQLTYSSMNLNNKIIPNNSIPAVSTIAAGEKPLKKCTMPNSNQLEGHTITNLQTLSATMPMKQQLMGNIASPLSYPRNATMNSASTLGITPADSKPLTPSPTTTNTNQSSESNVGSIHTGITLPRVESESASHSKWSKEADSGNTVPDNQTLKEPRSSQLPISALTSTDTDKIKTSTSDEATQPNEPSEAEPVKESESSKSQVDGAGDVSNEEIAADDTKKQEK.

2 stretches are compositionally biased toward polar residues: residues 1–12 (MPIGNPINTNDI) and 20–37 (ESNM…GQST). 3 disordered regions span residues 1 to 45 (MPIG…QQQQ), 78 to 121 (SQSQ…SNAT), and 202 to 355 (STFE…STDQ). A compositionally biased stretch (low complexity) spans 78–94 (SQSQQQLQSQPQMYQVQ). Positions 95–121 (ESFQSSGSDSNASNPPSTSVGVPSNAT) are enriched in polar residues. Low complexity-rich tracts occupy residues 206–219 (QQQQ…LQAQ) and 232–265 (FSKF…SISS). Polar residues-rich tracts occupy residues 266–282 (LAQQ…STYQ) and 304–318 (LTTP…NGPL). Over residues 322-339 (LPQVGLLPPQQQQQVSPL) the composition is skewed to low complexity. In terms of domain architecture, HTH APSES-type spans 414-520 (RVTTTMWEDE…RDIQSVLKQN (107 aa)). The H-T-H motif DNA-binding region spans 448 to 469 (GTKLLNVTKMTRGRRDGILKAE). 2 disordered regions span residues 519–538 (QNNP…IKSI) and 642–785 (MNSA…KQEK). 2 stretches are compositionally biased toward low complexity: residues 523–538 (SNDS…IKSI) and 655–674 (SKPL…SESN). A compositionally biased stretch (basic and acidic residues) spans 687–702 (VESESASHSKWSKEAD). Serine 771 carries the post-translational modification Phosphoserine.

It belongs to the EFG1/PHD1/stuA family.

Its subcellular location is the nucleus. Its function is as follows. Plays a general regulatory role in the cyclic AMP-dependent protein kinase-stimulated (PKA) signal transduction pathway by regulating the expression of genes important in growth and development. May inhibit the switch from unicellular to filamentous growth. This Saccharomyces cerevisiae (strain ATCC 204508 / S288c) (Baker's yeast) protein is Protein SOK2 (SOK2).